A 753-amino-acid polypeptide reads, in one-letter code: Polyribonucleotide nucleotidyltransferase (753 aa).

Residues D488 and D494 each contribute to the Mg(2+) site. Residues 555-614 (PKLYTMKINPEKIRDVIGKGGSTIRALTEETGTQIDIGEDGTITIASSDAAKADEAKRRI) form the KH domain. The S1 motif domain occupies 624 to 692 (GKIYEGPVTK…EKGRVKLSLK (69 aa)). The segment at 692-753 (KALTERPAGM…EGEQQQQQQQ (62 aa)) is disordered. The span at 699–739 (AGMERSDRPAPAEREFRQPREPRQQREFREPREPREPRDGG) shows a compositional bias: basic and acidic residues.

Belongs to the polyribonucleotide nucleotidyltransferase family. Mg(2+) serves as cofactor.

The protein localises to the cytoplasm. The catalysed reaction is RNA(n+1) + phosphate = RNA(n) + a ribonucleoside 5'-diphosphate. Its function is as follows. Involved in mRNA degradation. Catalyzes the phosphorolysis of single-stranded polyribonucleotides processively in the 3'- to 5'-direction. This Delftia acidovorans (strain DSM 14801 / SPH-1) protein is Polyribonucleotide nucleotidyltransferase.